Reading from the N-terminus, the 311-residue chain is Olfactory receptor 10J4 (311 aa).

Residues 1 to 29 (MPRPNFMAVTEFTFEGFSIFEWHHRLILF) are Extracellular-facing. A helical membrane pass occupies residues 30-50 (VIFLVLYVLTLASNAIILIVI). Topologically, residues 51–57 (RLNHQLH) are cytoplasmic. The chain crosses the membrane as a helical span at residues 58–78 (TPMYFFLSVLSISETYYTVAI). Over 79-98 (NPQMLSGLLSPQQTISIPGC) the chain is Extracellular. The cysteines at positions 98 and 180 are disulfide-linked. A helical membrane pass occupies residues 99-119 (AAQLFFYLTFGVNKCFLLTAM). At 120-149 (GYDHYVAICNPLQYSVIMGKKACIQLVSGS) the chain is on the cytoplasmic side. Residues 150–170 (WNIGLSTAIIQVSSVFSLPFC) form a helical membrane-spanning segment. Topologically, residues 171–202 (DANLISHFFCDIRPIMKLACADTTIKEFITLL) are extracellular. A helical membrane pass occupies residues 203–223 (ISLCVLVLPMVLIFISYVLIV). Residues 224–237 (TTILKIASAEGRRK) lie on the Cytoplasmic side of the membrane. The chain crosses the membrane as a helical span at residues 238–254 (AFATCASHLTVVIVHYG). Over 255–272 (RTSFIYLKPKSQNSLQDR) the chain is Extracellular. Residues 273–292 (LISVTYTVITPLLNPVVYSL) form a helical membrane-spanning segment. Over 293-311 (RNKEVKDALLRALGRKPLS) the chain is Cytoplasmic.

Belongs to the G-protein coupled receptor 1 family.

Its subcellular location is the cell membrane. In terms of biological role, odorant receptor. This chain is Olfactory receptor 10J4 (OR10J4), found in Homo sapiens (Human).